Reading from the N-terminus, the 102-residue chain is Small ribosomal subunit protein uS17 (102 aa).

Residues 1-15 are compositionally biased toward polar residues; sequence MTDETASQEASQSTD. The segment at 1-20 is disordered; it reads MTDETASQEASQSTDAAAPA.

This sequence belongs to the universal ribosomal protein uS17 family. As to quaternary structure, part of the 30S ribosomal subunit.

One of the primary rRNA binding proteins, it binds specifically to the 5'-end of 16S ribosomal RNA. This Frankia casuarinae (strain DSM 45818 / CECT 9043 / HFP020203 / CcI3) protein is Small ribosomal subunit protein uS17.